Consider the following 276-residue polypeptide: Glucosamine-6-phosphate deaminase 2 (276 aa).

Asp-72 acts as the Proton acceptor; for enolization step in catalysis. Positions 105-130 (HILDGNAADLQAECDAFENKIKEAGG) form a coiled coil. Asp-141 serves as the catalytic For ring-opening step. His-143 serves as the catalytic Proton acceptor; for ring-opening step. The active-site For ring-opening step is the Glu-148. Thr-161 is subject to Phosphothreonine.

Belongs to the glucosamine/galactosamine-6-phosphate isomerase family. In terms of assembly, homohexamer. In terms of tissue distribution, ubiquitous, with highest expression detected in testis, ovary, placenta, and heart.

The protein resides in the cytoplasm. It catalyses the reaction alpha-D-glucosamine 6-phosphate + H2O = beta-D-fructose 6-phosphate + NH4(+). The protein operates within nucleotide-sugar biosynthesis; UDP-N-acetyl-alpha-D-glucosamine biosynthesis; alpha-D-glucosamine 6-phosphate from D-fructose 6-phosphate: step 1/1. With respect to regulation, allosterically activated by N-acetylglucosamine-6-phosphate (GlcNAc6P). Catalyzes the reversible conversion of alpha-D-glucosamine 6-phosphate (GlcN-6P) into beta-D-fructose 6-phosphate (Fru-6P) and ammonium ion, a regulatory reaction step in de novo uridine diphosphate-N-acetyl-alpha-D-glucosamine (UDP-GlcNAc) biosynthesis via hexosamine pathway. Deamination is coupled to aldo-keto isomerization mediating the metabolic flux from UDP-GlcNAc toward Fru-6P. At high ammonium level can drive amination and isomerization of Fru-6P toward hexosamines and UDP-GlcNAc synthesis. Has a role in fine tuning the metabolic fluctuations of cytosolic UDP-GlcNAc and their effects on hyaluronan synthesis that occur during tissue remodeling. This Homo sapiens (Human) protein is Glucosamine-6-phosphate deaminase 2.